Consider the following 368-residue polypeptide: Probable endopolygalacturonase A (368 aa).

The N-terminal stretch at 1–18 is a signal peptide; that stretch reads MRSVKLFGLAALGSLGAA. Residues 19-31 constitute a propeptide that is removed on maturation; sequence APAPSRVSDLTKR. A disulfide bond links cysteine 35 and cysteine 50. PbH1 repeat units follow at residues 140–162, 167–192, 193–214, 215–235, 244–265, 273–295, and 307–352; these read LEDS…SVQA, LIDI…DISE, STGV…AINS, GENI…SIGS, VKNV…RIKT, VSQV…VIEQ, and TTGV…DITG. Residue aspartate 207 is the Proton donor of the active site. Cysteines 209 and 225 form a disulfide. The active site involves histidine 229. Asparagine 246 is a glycosylation site (N-linked (GlcNAc...) asparagine). Cystine bridges form between cysteine 335–cysteine 340 and cysteine 359–cysteine 368.

It belongs to the glycosyl hydrolase 28 family.

It is found in the secreted. It carries out the reaction (1,4-alpha-D-galacturonosyl)n+m + H2O = (1,4-alpha-D-galacturonosyl)n + (1,4-alpha-D-galacturonosyl)m.. Functionally, involved in maceration and soft-rotting of plant tissue. Hydrolyzes the 1,4-alpha glycosidic bonds of de-esterified pectate in the smooth region of the plant cell wall. This is Probable endopolygalacturonase A (pgaA) from Aspergillus fumigatus (strain CBS 144.89 / FGSC A1163 / CEA10) (Neosartorya fumigata).